Here is a 680-residue protein sequence, read N- to C-terminus: DNA ligase (680 aa).

NAD(+)-binding positions include 32–36 (DAVYD), 81–82 (SL), and glutamate 115. The active-site N6-AMP-lysine intermediate is lysine 117. 4 residues coordinate NAD(+): arginine 138, glutamate 175, lysine 291, and lysine 315. Zn(2+)-binding residues include cysteine 409, cysteine 412, cysteine 427, and cysteine 432. Residues 600–680 (ASEQHLKGLT…RLQAMLKDSP (81 aa)) enclose the BRCT domain.

It belongs to the NAD-dependent DNA ligase family. LigA subfamily. It depends on Mg(2+) as a cofactor. The cofactor is Mn(2+).

The catalysed reaction is NAD(+) + (deoxyribonucleotide)n-3'-hydroxyl + 5'-phospho-(deoxyribonucleotide)m = (deoxyribonucleotide)n+m + AMP + beta-nicotinamide D-nucleotide.. Functionally, DNA ligase that catalyzes the formation of phosphodiester linkages between 5'-phosphoryl and 3'-hydroxyl groups in double-stranded DNA using NAD as a coenzyme and as the energy source for the reaction. It is essential for DNA replication and repair of damaged DNA. This is DNA ligase from Synechococcus sp. (strain CC9902).